A 149-amino-acid chain; its full sequence is Epoxide hydrolase EphG (149 aa).

Aspartate 93 acts as the Proton donor in catalysis. Aspartate 122 serves as the catalytic Proton acceptor.

This sequence belongs to the limonene-1,2-epoxide hydrolase family. In terms of assembly, homodimer. Is also present as monomer in solution.

It carries out the reaction an epoxide + H2O = an ethanediol. It catalyses the reaction 5,6alpha-epoxy-5alpha-cholestan-3beta-ol + H2O = 5alpha-cholestane-3beta,5,6beta-triol. The enzyme catalyses 5,6beta-epoxy-5beta-cholestan-3beta-ol + H2O = 5alpha-cholestane-3beta,5,6beta-triol. With respect to regulation, is inhibited by the anti-epileptic drug valpromide (Ki value of about 100 uM). Epoxide hydrolase capable of hydrolyzing long or bulky lipophilic epoxides such as 9,10-epoxystearic acid and cholesterol 5,6-oxide in vitro. The physiological substrates have yet to be identified, but could be fatty acid or steroid derivatives. The chain is Epoxide hydrolase EphG (ephG) from Mycobacterium tuberculosis (strain ATCC 25618 / H37Rv).